The following is a 341-amino-acid chain: tRNA N6-adenosine threonylcarbamoyltransferase (341 aa).

Fe cation-binding residues include His-115 and His-119. Substrate-binding positions include 137-141, Asp-170, Gly-183, Asp-187, and Asn-276; that span reads IVSGG. Fe cation is bound at residue Asp-304.

This sequence belongs to the KAE1 / TsaD family. Fe(2+) is required as a cofactor.

It is found in the cytoplasm. The catalysed reaction is L-threonylcarbamoyladenylate + adenosine(37) in tRNA = N(6)-L-threonylcarbamoyladenosine(37) in tRNA + AMP + H(+). Required for the formation of a threonylcarbamoyl group on adenosine at position 37 (t(6)A37) in tRNAs that read codons beginning with adenine. Is involved in the transfer of the threonylcarbamoyl moiety of threonylcarbamoyl-AMP (TC-AMP) to the N6 group of A37, together with TsaE and TsaB. TsaD likely plays a direct catalytic role in this reaction. In Staphylococcus aureus (strain JH1), this protein is tRNA N6-adenosine threonylcarbamoyltransferase.